The following is a 571-amino-acid chain: Proline--tRNA ligase (571 aa).

Belongs to the class-II aminoacyl-tRNA synthetase family. ProS type 1 subfamily. As to quaternary structure, homodimer.

The protein resides in the cytoplasm. It carries out the reaction tRNA(Pro) + L-proline + ATP = L-prolyl-tRNA(Pro) + AMP + diphosphate. In terms of biological role, catalyzes the attachment of proline to tRNA(Pro) in a two-step reaction: proline is first activated by ATP to form Pro-AMP and then transferred to the acceptor end of tRNA(Pro). As ProRS can inadvertently accommodate and process non-cognate amino acids such as alanine and cysteine, to avoid such errors it has two additional distinct editing activities against alanine. One activity is designated as 'pretransfer' editing and involves the tRNA(Pro)-independent hydrolysis of activated Ala-AMP. The other activity is designated 'posttransfer' editing and involves deacylation of mischarged Ala-tRNA(Pro). The misacylated Cys-tRNA(Pro) is not edited by ProRS. The polypeptide is Proline--tRNA ligase (Mannheimia succiniciproducens (strain KCTC 0769BP / MBEL55E)).